The following is a 192-amino-acid chain: Peptidyl-tRNA hydrolase (192 aa).

Residue Tyr17 coordinates tRNA. His22 (proton acceptor) is an active-site residue. TRNA-binding residues include Phe68, Asn70, and Asn116.

This sequence belongs to the PTH family. As to quaternary structure, monomer.

It localises to the cytoplasm. The catalysed reaction is an N-acyl-L-alpha-aminoacyl-tRNA + H2O = an N-acyl-L-amino acid + a tRNA + H(+). In terms of biological role, hydrolyzes ribosome-free peptidyl-tRNAs (with 1 or more amino acids incorporated), which drop off the ribosome during protein synthesis, or as a result of ribosome stalling. Functionally, catalyzes the release of premature peptidyl moieties from peptidyl-tRNA molecules trapped in stalled 50S ribosomal subunits, and thus maintains levels of free tRNAs and 50S ribosomes. The polypeptide is Peptidyl-tRNA hydrolase (Hydrogenovibrio crunogenus (strain DSM 25203 / XCL-2) (Thiomicrospira crunogena)).